A 550-amino-acid polypeptide reads, in one-letter code: Chaperonin GroEL (550 aa).

ATP-binding positions include 30-33 (TLGP), Lys51, 87-91 (DGTTT), Gly415, and Asp496.

This sequence belongs to the chaperonin (HSP60) family. In terms of assembly, forms a cylinder of 14 subunits composed of two heptameric rings stacked back-to-back. Interacts with the co-chaperonin GroES.

The protein localises to the cytoplasm. It catalyses the reaction ATP + H2O + a folded polypeptide = ADP + phosphate + an unfolded polypeptide.. Functionally, together with its co-chaperonin GroES, plays an essential role in assisting protein folding. The GroEL-GroES system forms a nano-cage that allows encapsulation of the non-native substrate proteins and provides a physical environment optimized to promote and accelerate protein folding. This is Chaperonin GroEL from Rickettsia prowazekii (strain Madrid E).